We begin with the raw amino-acid sequence, 625 residues long: tRNA uridine 5-carboxymethylaminomethyl modification enzyme MnmG (625 aa).

FAD is bound at residue 11–16 (GAGHAG). Position 271–285 (271–285 (GPRYCPSIETKIVTF)) interacts with NAD(+).

This sequence belongs to the MnmG family. Homodimer. Heterotetramer of two MnmE and two MnmG subunits. Requires FAD as cofactor.

The protein resides in the cytoplasm. Its function is as follows. NAD-binding protein involved in the addition of a carboxymethylaminomethyl (cmnm) group at the wobble position (U34) of certain tRNAs, forming tRNA-cmnm(5)s(2)U34. This chain is tRNA uridine 5-carboxymethylaminomethyl modification enzyme MnmG, found in Porphyromonas gingivalis (strain ATCC BAA-308 / W83).